We begin with the raw amino-acid sequence, 39 residues long: Potassium channel toxin alpha-KTx 2.8 (39 aa).

3 disulfides stabilise this stretch: Cys7–Cys29, Cys13–Cys34, and Cys17–Cys36.

This sequence belongs to the short scorpion toxin superfamily. Potassium channel inhibitor family. Alpha-KTx 02 subfamily. As to expression, expressed by the venom gland.

It localises to the secreted. Functionally, blocks Kv1.3/KCNA3 voltage-gated potassium channels of human T-lymphocytes (Kd=0.71 nM). The polypeptide is Potassium channel toxin alpha-KTx 2.8 (Centruroides elegans (Bark scorpion)).